The sequence spans 225 residues: NAD(P)H-quinone oxidoreductase subunit K, chloroplastic (225 aa).

Residues Cys43, Cys44, Cys108, and Cys139 each contribute to the [4Fe-4S] cluster site.

Belongs to the complex I 20 kDa subunit family. In terms of assembly, NDH is composed of at least 16 different subunits, 5 of which are encoded in the nucleus. Requires [4Fe-4S] cluster as cofactor.

The protein resides in the plastid. Its subcellular location is the chloroplast thylakoid membrane. It carries out the reaction a plastoquinone + NADH + (n+1) H(+)(in) = a plastoquinol + NAD(+) + n H(+)(out). The enzyme catalyses a plastoquinone + NADPH + (n+1) H(+)(in) = a plastoquinol + NADP(+) + n H(+)(out). NDH shuttles electrons from NAD(P)H:plastoquinone, via FMN and iron-sulfur (Fe-S) centers, to quinones in the photosynthetic chain and possibly in a chloroplast respiratory chain. The immediate electron acceptor for the enzyme in this species is believed to be plastoquinone. Couples the redox reaction to proton translocation, and thus conserves the redox energy in a proton gradient. The chain is NAD(P)H-quinone oxidoreductase subunit K, chloroplastic from Dioscorea elephantipes (Elephant's foot yam).